The primary structure comprises 294 residues: Nucleotide-binding protein CPF_0343 (294 aa).

8-15 (GLSGAGKT) serves as a coordination point for ATP. 59 to 62 (DIRG) provides a ligand contact to GTP.

Belongs to the RapZ-like family.

In terms of biological role, displays ATPase and GTPase activities. The sequence is that of Nucleotide-binding protein CPF_0343 from Clostridium perfringens (strain ATCC 13124 / DSM 756 / JCM 1290 / NCIMB 6125 / NCTC 8237 / Type A).